The primary structure comprises 244 residues: Transcriptional regulatory protein YpdB (244 aa).

One can recognise a Response regulatory domain in the interval K2–E116. 4-aspartylphosphate is present on D53. The HTH LytTR-type domain occupies I139–L244.

Post-translationally, phosphorylated by YpdA.

It localises to the cytoplasm. Member of the two-component regulatory system YpdA/YpdB. YpdB regulates expression of yhjX by binding to its promoter region. In Escherichia coli O157:H7, this protein is Transcriptional regulatory protein YpdB (ypdB).